The sequence spans 505 residues: Cytochrome P450 monooxygenase efuB (505 aa).

Residues 12–34 form a helical membrane-spanning segment; it reads GFWPTVAGTVATYLFYQIVATVY. Residue cysteine 450 coordinates heme.

It belongs to the cytochrome P450 family. It depends on heme as a cofactor.

It is found in the membrane. The protein operates within secondary metabolite biosynthesis; terpenoid biosynthesis. Cytochrome P450 monooxygenase; part of the gene cluster that mediates the biosynthesis of enfumafungin, a glycosylated fernene-type triterpenoid with potent antifungal activity, mediated by its interaction with beta-1,3-glucan synthase and the fungal cell wall. The pathway begins with the terpene cyclase-glycosyl transferase fusion protein that most likely uses 2,3-oxidosqualene as substrate and catalyzes glycosylation immediately after cyclization. The fernene glycoside then could be processed by the desaturase efuI which catalyzes isomerization of a double bond established by efuA to form the core structure. The latter would then undergo a series of hydroxylations in unknown order at C-2, C-19, C-23 and C-25, which would be catalyzed by two of the three cytochrome P450 monooxygenases efuB, efuG or efuH. The hydroxy-group at C-25 becomes oxidized by the dehydrogenase efuE to enable a spontaneous, non-enzymatic hemiacetal formation with C-23. After hydroxylation at C-2, acetylation by the acetyltransferase efuC takes place. The final steps in enfumafungin biosynthesis require expansion of the 5-membered ring by lactonization via a Baeyer-Villiger reaction mediated by one of the BGC's cytochrome P450 monooxygenases (efuB, efuG or efuH) followed by ring cleavage. This type of reaction would establish a double bond between C-20 and C-21 which could be reduced by the reductase efuL to form the final product. This chain is Cytochrome P450 monooxygenase efuB, found in Hormonema carpetanum.